Here is a 479-residue protein sequence, read N- to C-terminus: MTVTTSSPATAPGRTPGIGRVARVIGPVVDVEFAPDELPEIYQALQVDRTIGDETLTLTLEVAQHIGDNTVRAISMQQTDGLVRGAPVHDTGAPISVPVGDATKGHVFNVLGTPLDVKQIEAETYWPIHRSAPAFDQLESKTEMFTTGIKVIDLLAPYVRGGKIGLFGGAGVGKTVIIQEMIRRVAKEFGGVSVFAGVGERTREGNDLFLEMTEAGVIEDTALVFGQMDEPPGTRLRVALGALTMAEYFRDVQKQDVLLFIDNIFRFTQAGSEVSTLLGRMPSAVGYQPTLADEMGVLQERITSTRGHSITSLQAIYVPADDLTDPAPATTFTHLDATTVLDRAISDLGIYPAVSPLDSNSRILDARYLGQEHYDTAREVQRILQRYKDLQDIIAILGIDELSEEDKILVNRARRIQRFLSQPFFVAEQFTGIPGKFVPLDETIDSFKRLTQGDFDHLPEQAFFMCGGIEDAEKNAENL.

An ATP-binding site is contributed by 168–175 (GGAGVGKT).

It belongs to the ATPase alpha/beta chains family. F-type ATPases have 2 components, CF(1) - the catalytic core - and CF(0) - the membrane proton channel. CF(1) has five subunits: alpha(3), beta(3), gamma(1), delta(1), epsilon(1). CF(0) has three main subunits: a(1), b(2) and c(9-12). The alpha and beta chains form an alternating ring which encloses part of the gamma chain. CF(1) is attached to CF(0) by a central stalk formed by the gamma and epsilon chains, while a peripheral stalk is formed by the delta and b chains.

The protein localises to the cell membrane. The catalysed reaction is ATP + H2O + 4 H(+)(in) = ADP + phosphate + 5 H(+)(out). Functionally, produces ATP from ADP in the presence of a proton gradient across the membrane. The catalytic sites are hosted primarily by the beta subunits. In Frankia casuarinae (strain DSM 45818 / CECT 9043 / HFP020203 / CcI3), this protein is ATP synthase subunit beta.